An 876-amino-acid polypeptide reads, in one-letter code: DNA mismatch repair protein MutS (876 aa).

628-635 (GPNMAGKS) is an ATP binding site.

It belongs to the DNA mismatch repair MutS family.

Its function is as follows. This protein is involved in the repair of mismatches in DNA. It is possible that it carries out the mismatch recognition step. This protein has a weak ATPase activity. The sequence is that of DNA mismatch repair protein MutS from Chlorobaculum parvum (strain DSM 263 / NCIMB 8327) (Chlorobium vibrioforme subsp. thiosulfatophilum).